We begin with the raw amino-acid sequence, 119 residues long: UPF0102 protein MS1289 (119 aa).

The protein belongs to the UPF0102 family.

The sequence is that of UPF0102 protein MS1289 from Mannheimia succiniciproducens (strain KCTC 0769BP / MBEL55E).